A 101-amino-acid chain; its full sequence is Small ribosomal subunit protein uS14 (101 aa).

A disordered region spans residues 1–26 (MAKVSSIKKNESRKKKSQSLHNKRSA). The span at 11 to 26 (ESRKKKSQSLHNKRSA) shows a compositional bias: basic residues.

Belongs to the universal ribosomal protein uS14 family. In terms of assembly, part of the 30S ribosomal subunit. Contacts proteins S3 and S10.

Functionally, binds 16S rRNA, required for the assembly of 30S particles and may also be responsible for determining the conformation of the 16S rRNA at the A site. This is Small ribosomal subunit protein uS14 from Rickettsia felis (strain ATCC VR-1525 / URRWXCal2) (Rickettsia azadi).